The sequence spans 564 residues: Sulfite reductase [NADPH] hemoprotein beta-component 2 (564 aa).

Residues Cys426, Cys432, Cys471, and Cys475 each coordinate [4Fe-4S] cluster. Cys475 is a binding site for siroheme.

Belongs to the nitrite and sulfite reductase 4Fe-4S domain family. Alpha(8)-beta(8). The alpha component is a flavoprotein, the beta component is a hemoprotein. Siroheme is required as a cofactor. Requires [4Fe-4S] cluster as cofactor.

The enzyme catalyses hydrogen sulfide + 3 NADP(+) + 3 H2O = sulfite + 3 NADPH + 4 H(+). It participates in sulfur metabolism; hydrogen sulfide biosynthesis; hydrogen sulfide from sulfite (NADPH route): step 1/1. In terms of biological role, component of the sulfite reductase complex that catalyzes the 6-electron reduction of sulfite to sulfide. This is one of several activities required for the biosynthesis of L-cysteine from sulfate. The protein is Sulfite reductase [NADPH] hemoprotein beta-component 2 of Klebsiella pneumoniae (strain 342).